The following is a 126-amino-acid chain: Methylglyoxal synthase (126 aa).

In terms of domain architecture, MGS-like spans 1–126 (MEKKIALIAH…LIKGLESLIF (126 aa)). Substrate-binding positions include histidine 10, lysine 14, 36–39 (TGTT), and 56–57 (SG). Aspartate 62 (proton donor/acceptor) is an active-site residue. Substrate is bound at residue histidine 89.

It belongs to the methylglyoxal synthase family.

The enzyme catalyses dihydroxyacetone phosphate = methylglyoxal + phosphate. Catalyzes the formation of methylglyoxal from dihydroxyacetone phosphate. This is Methylglyoxal synthase from Borreliella burgdorferi (strain ATCC 35210 / DSM 4680 / CIP 102532 / B31) (Borrelia burgdorferi).